Here is a 461-residue protein sequence, read N- to C-terminus: Bifunctional protein HldE (461 aa).

The tract at residues 1 to 315 (MKKILVIGDL…LILNQTHPKI (315 aa)) is ribokinase. 191–194 (NRTE) provides a ligand contact to ATP. Residue aspartate 260 is part of the active site. A cytidylyltransferase region spans residues 332–461 (FTNGCFDLLH…IEKIKRTCND (130 aa)).

This sequence in the N-terminal section; belongs to the carbohydrate kinase PfkB family. The protein in the C-terminal section; belongs to the cytidylyltransferase family. Homodimer.

The catalysed reaction is D-glycero-beta-D-manno-heptose 7-phosphate + ATP = D-glycero-beta-D-manno-heptose 1,7-bisphosphate + ADP + H(+). It catalyses the reaction D-glycero-beta-D-manno-heptose 1-phosphate + ATP + H(+) = ADP-D-glycero-beta-D-manno-heptose + diphosphate. The protein operates within nucleotide-sugar biosynthesis; ADP-L-glycero-beta-D-manno-heptose biosynthesis; ADP-L-glycero-beta-D-manno-heptose from D-glycero-beta-D-manno-heptose 7-phosphate: step 1/4. It functions in the pathway nucleotide-sugar biosynthesis; ADP-L-glycero-beta-D-manno-heptose biosynthesis; ADP-L-glycero-beta-D-manno-heptose from D-glycero-beta-D-manno-heptose 7-phosphate: step 3/4. It participates in bacterial outer membrane biogenesis; LPS core biosynthesis. Catalyzes the phosphorylation of D-glycero-D-manno-heptose 7-phosphate at the C-1 position to selectively form D-glycero-beta-D-manno-heptose-1,7-bisphosphate. In terms of biological role, catalyzes the ADP transfer from ATP to D-glycero-beta-D-manno-heptose 1-phosphate, yielding ADP-D-glycero-beta-D-manno-heptose. The protein is Bifunctional protein HldE of Helicobacter pylori (strain ATCC 700392 / 26695) (Campylobacter pylori).